A 418-amino-acid polypeptide reads, in one-letter code: UDP-N-acetylglucosamine 1-carboxyvinyltransferase (418 aa).

Residue 22-23 coordinates phosphoenolpyruvate; the sequence is KN. Residue Arg-92 coordinates UDP-N-acetyl-alpha-D-glucosamine. The Proton donor role is filled by Cys-116. Cys-116 is subject to 2-(S-cysteinyl)pyruvic acid O-phosphothioketal. UDP-N-acetyl-alpha-D-glucosamine-binding positions include 121–125, Asp-305, and Leu-327; that span reads RPIDL.

The protein belongs to the EPSP synthase family. MurA subfamily.

The protein localises to the cytoplasm. It carries out the reaction phosphoenolpyruvate + UDP-N-acetyl-alpha-D-glucosamine = UDP-N-acetyl-3-O-(1-carboxyvinyl)-alpha-D-glucosamine + phosphate. Its pathway is cell wall biogenesis; peptidoglycan biosynthesis. Cell wall formation. Adds enolpyruvyl to UDP-N-acetylglucosamine. The sequence is that of UDP-N-acetylglucosamine 1-carboxyvinyltransferase from Campylobacter jejuni subsp. jejuni serotype O:6 (strain 81116 / NCTC 11828).